The sequence spans 167 residues: Gem-associated protein 6 (167 aa).

The 68-residue stretch at 7–74 folds into the Sm domain; the sequence is KGPLEWQDYI…VQTVETMNEG (68 aa). An AD domain is found at 69 to 167; sequence ETMNEGDHRV…LIEGHLTASQ (99 aa). Residues serine 95 and serine 166 each carry the phosphoserine modification.

As to quaternary structure, part of the core SMN complex that contains SMN1, GEMIN2/SIP1, DDX20/GEMIN3, GEMIN4, GEMIN5, GEMIN6, GEMIN7, GEMIN8 and STRAP/UNRIP. Part of the SMN-Sm complex that contains SMN1, GEMIN2/SIP1, DDX20/GEMIN3, GEMIN4, GEMIN5, GEMIN6, GEMIN7, GEMIN8, STRAP/UNRIP and the Sm proteins SNRPB, SNRPD1, SNRPD2, SNRPD3, SNRPE, SNRPF and SNRPG. Interacts with GEMIN7; the interaction is direct. Interacts with GEMIN8; the interaction is direct. Interacts with SNRPB, SNRPD2, SNRPD3 and SNRPE; the interaction is direct.

The protein resides in the nucleus. It localises to the nucleoplasm. Its subcellular location is the gem. It is found in the cytoplasm. In terms of biological role, the SMN complex catalyzes the assembly of small nuclear ribonucleoproteins (snRNPs), the building blocks of the spliceosome, and thereby plays an important role in the splicing of cellular pre-mRNAs. Most spliceosomal snRNPs contain a common set of Sm proteins SNRPB, SNRPD1, SNRPD2, SNRPD3, SNRPE, SNRPF and SNRPG that assemble in a heptameric protein ring on the Sm site of the small nuclear RNA to form the core snRNP (Sm core). In the cytosol, the Sm proteins SNRPD1, SNRPD2, SNRPE, SNRPF and SNRPG are trapped in an inactive 6S pICln-Sm complex by the chaperone CLNS1A that controls the assembly of the core snRNP. To assemble core snRNPs, the SMN complex accepts the trapped 5Sm proteins from CLNS1A forming an intermediate. Binding of snRNA inside 5Sm triggers eviction of the SMN complex, thereby allowing binding of SNRPD3 and SNRPB to complete assembly of the core snRNP. The sequence is that of Gem-associated protein 6 (GEMIN6) from Homo sapiens (Human).